A 411-amino-acid polypeptide reads, in one-letter code: L-cysteine:1D-myo-inositol 2-amino-2-deoxy-alpha-D-glucopyranoside ligase (411 aa).

A Zn(2+)-binding site is contributed by C43. Residues 43–46 (CGIT), T58, and 81–83 (NVT) contribute to the L-cysteinyl-5'-AMP site. The 'HIGH' region motif lies at 45–55 (ITPYDATHLGH). Positions 186–191 (QRGGDP) match the 'ERGGDP' region motif. Position 226 (W226) interacts with L-cysteinyl-5'-AMP. Residue C230 coordinates Zn(2+). 248–250 (GSD) is an L-cysteinyl-5'-AMP binding site. Position 255 (H255) interacts with Zn(2+). Position 282 (I282) interacts with L-cysteinyl-5'-AMP. A 'KMSKS' region motif is present at residues 288–292 (KMSKS).

This sequence belongs to the class-I aminoacyl-tRNA synthetase family. MshC subfamily. Monomer. Zn(2+) serves as cofactor.

It catalyses the reaction 1D-myo-inositol 2-amino-2-deoxy-alpha-D-glucopyranoside + L-cysteine + ATP = 1D-myo-inositol 2-(L-cysteinylamino)-2-deoxy-alpha-D-glucopyranoside + AMP + diphosphate + H(+). In terms of biological role, catalyzes the ATP-dependent condensation of GlcN-Ins and L-cysteine to form L-Cys-GlcN-Ins. The sequence is that of L-cysteine:1D-myo-inositol 2-amino-2-deoxy-alpha-D-glucopyranoside ligase from Mycobacterium marinum (strain ATCC BAA-535 / M).